A 183-amino-acid chain; its full sequence is Large ribosomal subunit protein eL18 (183 aa).

Positions 151 to 183 (HFGPAPGAPRSHTKPYVRSKGHEQAKPSRRSNV) are disordered.

It belongs to the eukaryotic ribosomal protein eL18 family.

The protein localises to the cytoplasm. This chain is Large ribosomal subunit protein eL18 (RpL18), found in Plutella xylostella (Diamondback moth).